A 268-amino-acid polypeptide reads, in one-letter code: Glutamate racemase (268 aa).

Residues 10 to 11 (DS) and 42 to 43 (YG) each bind substrate. The active-site Proton donor/acceptor is the Cys73. 74–75 (NT) contributes to the substrate binding site. The active-site Proton donor/acceptor is Cys184. Position 185-186 (185-186 (TH)) interacts with substrate.

Belongs to the aspartate/glutamate racemases family.

It carries out the reaction L-glutamate = D-glutamate. The protein operates within cell wall biogenesis; peptidoglycan biosynthesis. Provides the (R)-glutamate required for cell wall biosynthesis. This chain is Glutamate racemase, found in Carnobacterium sp. (strain St2).